The sequence spans 490 residues: Cytochrome P450 2C25 (490 aa).

Cys-435 serves as a coordination point for heme.

The protein belongs to the cytochrome P450 family. Requires heme as cofactor.

The protein resides in the endoplasmic reticulum membrane. Its subcellular location is the microsome membrane. It carries out the reaction an organic molecule + reduced [NADPH--hemoprotein reductase] + O2 = an alcohol + oxidized [NADPH--hemoprotein reductase] + H2O + H(+). Its function is as follows. Catalyzes the hydroxylation of tolbutamide and the N-demethylation of aminopyrine and benzphetamine. Also has testosterone hydroxylase (16 beta) activity. In Mesocricetus auratus (Golden hamster), this protein is Cytochrome P450 2C25 (CYP2C25).